The sequence spans 84 residues: U-scoloptoxin(10)-Er1a (84 aa).

Residues 1–24 (MSRFCLLFVAFGFVLYFLHMEVTG) form the signal peptide.

The protein belongs to the scoloptoxin-10 family. In terms of processing, contains 3 disulfide bonds. Expressed by the venom gland.

The protein resides in the secreted. The chain is U-scoloptoxin(10)-Er1a from Ethmostigmus rubripes (Giant centipede).